The primary structure comprises 387 residues: ATP phosphoribosyltransferase regulatory subunit (387 aa).

This sequence belongs to the class-II aminoacyl-tRNA synthetase family. HisZ subfamily. In terms of assembly, heteromultimer composed of HisG and HisZ subunits.

It is found in the cytoplasm. It functions in the pathway amino-acid biosynthesis; L-histidine biosynthesis; L-histidine from 5-phospho-alpha-D-ribose 1-diphosphate: step 1/9. Required for the first step of histidine biosynthesis. May allow the feedback regulation of ATP phosphoribosyltransferase activity by histidine. The chain is ATP phosphoribosyltransferase regulatory subunit from Psychrobacter cryohalolentis (strain ATCC BAA-1226 / DSM 17306 / VKM B-2378 / K5).